The chain runs to 86 residues: UPF0457 protein SAUSA300_2132 (86 aa).

This sequence belongs to the UPF0457 family.

The protein is UPF0457 protein SAUSA300_2132 of Staphylococcus aureus (strain USA300).